The following is a 419-amino-acid chain: MHVLILGGGVVGVTSAYYLARAGHQVTVLERQPGAGLETSFANAGQVSPGYSAPWAAPGIPVKALRWLMMRHRPLVLWPRLEPRLYAWLTRMLANCTEEAYRRNKGRMVRLAEYSRDALRDLRTETGIAYDHREKGTLQLFRTRKQLDHVGDDTRVLDAYGVPYTVLDPAGCIAAEPALAAVRDVFVGGLRLPGDETGDAHLFTQRLAALCESLGVTFRYGTAIARLHHAGDRVTAVETADGALLRADAYVAALGSYTPALLRPLGIALPVYPVKGYSLTLPITDAEAAPVSTVMDETYKVAITRLGDRIRVGGTAELAGFSNALRGPRRETLARSVQDLFPAGGDLDKASFWTGLRPMTPDGTPIVGGTRVGNLFTNTGHGTLGWTMACGSGRLLADLVSGRAPEIASDDLALGRYAA.

3–17 is an FAD binding site; sequence VLILGGGVVGVTSAY.

It belongs to the DadA oxidoreductase family. FAD serves as cofactor.

The catalysed reaction is a D-alpha-amino acid + A + H2O = a 2-oxocarboxylate + AH2 + NH4(+). The protein operates within amino-acid degradation; D-alanine degradation; NH(3) and pyruvate from D-alanine: step 1/1. Oxidative deamination of D-amino acids. This Methylobacterium radiotolerans (strain ATCC 27329 / DSM 1819 / JCM 2831 / NBRC 15690 / NCIMB 10815 / 0-1) protein is D-amino acid dehydrogenase.